The primary structure comprises 867 residues: Putative tyrosine-protein kinase F09A5.2 (867 aa).

A run of 2 helical transmembrane segments spans residues 45–65 (VMKILSGFSLIIIVVFIFATS) and 355–375 (LLLIIGIPCISLTICCIAFFV). 2 N-linked (GlcNAc...) asparagine glycosylation sites follow: asparagine 395 and asparagine 423. A Protein kinase domain is found at 467–757 (VQEDHLLGNG…FNEMRGEITV (291 aa)). 473–481 (LGNGAFANV) serves as a coordination point for ATP. Asparagine 496 and asparagine 500 each carry an N-linked (GlcNAc...) asparagine glycan. Lysine 516 lines the ATP pocket. Residue asparagine 585 is glycosylated (N-linked (GlcNAc...) asparagine). Aspartate 626 serves as the catalytic Proton acceptor. Disordered stretches follow at residues 782–821 (LTMQDSKETAPCSTPGGSQDMDEDGDYDSGSEGHSQGTCA) and 848–867 (SKSMRGKRRQSNSTVSTYQS). Over residues 801–810 (DMDEDGDYDS) the composition is skewed to acidic residues. The segment covering 858 to 867 (SNSTVSTYQS) has biased composition (polar residues). N-linked (GlcNAc...) asparagine glycosylation is present at asparagine 859.

The protein belongs to the protein kinase superfamily. Tyr protein kinase family.

It localises to the membrane. It carries out the reaction L-tyrosyl-[protein] + ATP = O-phospho-L-tyrosyl-[protein] + ADP + H(+). The chain is Putative tyrosine-protein kinase F09A5.2 from Caenorhabditis elegans.